Here is a 692-residue protein sequence, read N- to C-terminus: FMR1-interacting protein NUFIP2 (692 aa).

The tract at residues 1-100 (MEEKPGQPQP…KKTGYGEING (100 aa)) is disordered. Composition is skewed to basic residues over residues 11 to 23 (QHHHSHHHPHHHP) and 31 to 54 (SHHHHHYYFYNHSHNHHHHHHHQQ). A Glycyl lysine isopeptide (Lys-Gly) (interchain with G-Cter in SUMO2) cross-link involves residue K79. At T88 the chain carries Phosphothreonine. K110 participates in a covalent cross-link: Glycyl lysine isopeptide (Lys-Gly) (interchain with G-Cter in SUMO2). A phosphoserine mark is found at S113 and S114. Residues K137, K147, K158, and K172 each participate in a glycyl lysine isopeptide (Lys-Gly) (interchain with G-Cter in SUMO2) cross-link. The tract at residues 205 to 233 (SKGADNDGSGSESGYTTPKKRKARRNSAK) is disordered. Residues S213 and S215 each carry the phosphoserine modification. A Phosphotyrosine modification is found at Y219. Residues T220 and T221 each carry the phosphothreonine modification. Positions 222–231 (PKKRKARRNS) are enriched in basic residues. Glycyl lysine isopeptide (Lys-Gly) (interchain with G-Cter in SUMO2) cross-links involve residues K262 and K281. Disordered stretches follow at residues 277 to 337 (KPIW…WTLF) and 369 to 401 (TVQNSSVSPSSSSSSSSTGETQTQSSSRLSQVP). An Omega-N-methylarginine modification is found at R291. Residue K293 forms a Glycyl lysine isopeptide (Lys-Gly) (interchain with G-Cter in SUMO2) linkage. S304 is modified (phosphoserine). K307 is covalently cross-linked (Glycyl lysine isopeptide (Lys-Gly) (interchain with G-Cter in SUMO2)). Positions 371 to 395 (QNSSVSPSSSSSSSSTGETQTQSSS) are enriched in low complexity. A Phosphoserine modification is found at S376. Position 569 is a phosphothreonine (T569). Phosphoserine is present on residues S570, S589, S605, and S626. Position 630 is a phosphothreonine (T630). Residues S634, S649, S652, and S689 each carry the phosphoserine modification.

In terms of assembly, interacts with FMR1 (via N-terminus). Interacts with DDX6.

The protein resides in the nucleus. Its subcellular location is the cytoplasm. It is found in the stress granule. Functionally, binds RNA. The polypeptide is FMR1-interacting protein NUFIP2 (Nufip2) (Mus musculus (Mouse)).